A 126-amino-acid chain; its full sequence is Putative regulator AldR (126 aa).

It belongs to the RutC family.

Its function is as follows. Implicated in the regulation of isoleucine biosynthesis. This Lactococcus lactis subsp. lactis (strain IL1403) (Streptococcus lactis) protein is Putative regulator AldR (aldR).